The sequence spans 60 residues: Homeobox protein EgHBX4 (60 aa).

The homeobox DNA-binding region spans 1 to 60 (SRRERTIYTPEQLEAMEEVFGVNRYPDVSMREELASRLGINESKIQVWFKNRRAKLRNLE).

It belongs to the paired homeobox family. Bicoid subfamily.

The protein resides in the nucleus. The chain is Homeobox protein EgHBX4 (HBX4) from Echinococcus granulosus (Hydatid tapeworm).